Consider the following 36-residue polypeptide: Insecticidal toxin LaIT1 (36 aa).

2 cysteine pairs are disulfide-bonded: cysteine 11-cysteine 23 and cysteine 17-cysteine 29.

As to expression, expressed by the venom gland.

It is found in the secreted. Functionally, affects the activity of both ryanodine-sensitive calcium-release channels RyR1 and RyR2 with high potency. At lower concentrations the toxin increases full openings of the RyRs, and at higher concentrations it inhibits full openings and induce openings to subconductance levels and reduces the number of full conductance openings. The different actions may be attributed to the toxins binding at different sites on the RyRs, with binding at a high-affinity site mediating the increase in full openings and the induction of subconductance states evoked upon binding to a lower-affinity site. Shows insect lethality against crickets and common cutworms (only shows paralysis against cockroaches), but no toxicity is observed in mice. The protein is Insecticidal toxin LaIT1 of Liocheles australasiae (Dwarf wood scorpion).